Here is a 722-residue protein sequence, read N- to C-terminus: MAR-binding filament-like protein 1-1 (722 aa).

Residues 1–20 (MGSSCFPQSPLSHSLFSSSS) are disordered. The N-terminal 50 residues, 1 to 50 (MGSSCFPQSPLSHSLFSSSSLSSSQFTPLLFSPRNAQKCKKKMPAMACIH), are a transit peptide targeting the chloroplast. The transit peptide at 51–84 (SENQKESEFCSRRTILFVGFSVLPLLSLRANAFE) directs the protein to the thylakoid. Residues 85–112 (GLSVDSQVKAQPQKEETEQTIQGNAENP) are Lumenal, thylakoid-facing. The helical transmembrane segment at 113-133 (FFSLLNGLGVFGSGVLGSLYA) threads the bilayer. The Stromal segment spans residues 134 to 722 (LARNEKAVSD…TQPASQQESS (589 aa)). A coiled-coil region spans residues 146–679 (IESMKNKLKE…KGEILRLRTQ (534 aa)). A disordered region spans residues 687-722 (VNNEEKVEAGEKAAVTVKRTRRRKTATQPASQQESS). Positions 705-712 (RTRRRKTA) match the Nuclear localization signal motif.

Interacts with PTST2; the interaction is essential for the initiation of starch granules biosynthesis in leaf chloroplasts, for the correct location of the process in the stromal spaces between the thylakoid membranes, and for the association of PTST2 with the thylakoid membranes. Predicted to be translocated into the thylakoid by the Tat system.

It is found in the plastid. The protein localises to the chloroplast. The protein resides in the chloroplast thylakoid membrane. Its subcellular location is the chloroplast stroma. It localises to the chloroplast nucleoid. It is found in the nucleus. The protein localises to the nucleus matrix. Functionally, required for the initiation of starch granules biosynthesis in leaf chloroplasts. Anchored to the thylakoid membranes with its C-terminus facing into the stroma where it is essential for localizing PTST2 and SS4 to the stromal spaces between the thylakoid membranes in order to begin starch granule formation. Associated with leaf chloroplastic nucleoids in vivo. Binds to various chloroplastic double-stranded DNA fragments without particular sequence specificity in vitro. May function at the interface between nucleoids and thylakoids possibly by anchoring nucleoids to the thylakoid membrane system in mature chloroplasts. Likely to participate in nuclear architecture by connecting chromatin with the nuclear matrix and potentially with the nuclear envelope. This is MAR-binding filament-like protein 1-1 from Nicotiana tabacum (Common tobacco).